A 203-amino-acid polypeptide reads, in one-letter code: dITP/XTP pyrophosphatase (203 aa).

7 to 12 (SGNLHK) contributes to the substrate binding site. 2 residues coordinate Mg(2+): Glu47 and Asp77. The active-site Proton acceptor is Asp77. Residues Ser78, 160–163 (FGYD), Lys183, and 188–189 (HR) contribute to the substrate site.

Belongs to the HAM1 NTPase family. As to quaternary structure, homodimer. The cofactor is Mg(2+).

The enzyme catalyses XTP + H2O = XMP + diphosphate + H(+). It catalyses the reaction dITP + H2O = dIMP + diphosphate + H(+). It carries out the reaction ITP + H2O = IMP + diphosphate + H(+). Pyrophosphatase that catalyzes the hydrolysis of nucleoside triphosphates to their monophosphate derivatives, with a high preference for the non-canonical purine nucleotides XTP (xanthosine triphosphate), dITP (deoxyinosine triphosphate) and ITP. Seems to function as a house-cleaning enzyme that removes non-canonical purine nucleotides from the nucleotide pool, thus preventing their incorporation into DNA/RNA and avoiding chromosomal lesions. The protein is dITP/XTP pyrophosphatase of Opitutus terrae (strain DSM 11246 / JCM 15787 / PB90-1).